A 362-amino-acid chain; its full sequence is DNA replication and repair protein RecF (362 aa).

ATP is bound at residue Gly30–Thr37.

It belongs to the RecF family.

Its subcellular location is the cytoplasm. In terms of biological role, the RecF protein is involved in DNA metabolism; it is required for DNA replication and normal SOS inducibility. RecF binds preferentially to single-stranded, linear DNA. It also seems to bind ATP. This Agathobacter rectalis (strain ATCC 33656 / DSM 3377 / JCM 17463 / KCTC 5835 / VPI 0990) (Eubacterium rectale) protein is DNA replication and repair protein RecF.